The sequence spans 141 residues: Hemoglobin subunit alpha (141 aa).

Positions 1–141 constitute a Globin domain; that stretch reads VLSATDKANV…VATVLTSKYR (141 aa). A Phosphoserine modification is found at S3. An N6-succinyllysine mark is found at K7 and K11. Residue K16 is modified to N6-acetyllysine; alternate. The residue at position 16 (K16) is an N6-succinyllysine; alternate. Y24 carries the phosphotyrosine modification. K40 carries the N6-succinyllysine modification. H58 provides a ligand contact to O2. H87 serves as a coordination point for heme b. S102 bears the Phosphoserine mark. Position 108 is a phosphothreonine (T108). Position 124 is a phosphoserine (S124). Residues T134 and T137 each carry the phosphothreonine modification. S138 is subject to Phosphoserine.

Belongs to the globin family. Heterotetramer of two alpha chains and two beta chains. In terms of tissue distribution, red blood cells.

Involved in oxygen transport from the lung to the various peripheral tissues. Functionally, hemopressin acts as an antagonist peptide of the cannabinoid receptor CNR1. Hemopressin-binding efficiently blocks cannabinoid receptor CNR1 and subsequent signaling. In Erinaceus europaeus (Western European hedgehog), this protein is Hemoglobin subunit alpha (HBA).